A 988-amino-acid polypeptide reads, in one-letter code: RecQ-like DNA helicase blm-1 (988 aa).

Residues 46–119 (CEEREEEYID…QFPSRPQKRL (74 aa)) are disordered. A run of 2 repeats spans residues 121–129 (DPPIVDLDE) and 130–138 (EPPIVDLDD). Positions 121-138 (DPPIVDLDEEPPIVDLDD) are 2 X 9 AA tandem repeats of [DE]-P-P-I-V-D-L-D-[ED]. Residues 148–185 (TSEEVVSGDIAPEEEEEEGHDSFDDFESVPAQPPSKNT) are disordered. Residues 158–174 (APEEEEEEGHDSFDDFE) show a composition bias toward acidic residues. ATP is bound by residues 248–252 (FRHRQ) and 272–276 (GAGKS). The Helicase ATP-binding domain occupies 256-433 (ILSTLMGHDT…RDHLKMQNSK (178 aa)). The short motif at 375 to 378 (DEAH) is the DEAH box element. The 146-residue stretch at 458–603 (NVVEKMKQLY…VRSMHLNNVL (146 aa)) folds into the Helicase C-terminal domain. The tract at residues 478–480 (SRK) is 3' overhang DNA-binding. Arg562 provides a ligand contact to ATP. A 3' overhang DNA-binding region spans residues 580 to 583 (RLRR). Residues Cys615, Cys633, Cys640, and Cys643 each coordinate Zn(2+). 3 3' overhang DNA-binding regions span residues 676 to 678 (TLK), 687 to 691 (ALIKK), and 736 to 742 (YSVPNQA). The region spanning 807 to 888 (GDVFTRCLQD…ATYWKQVDER (82 aa)) is the HRDC domain. A disordered region spans residues 930–988 (GGGGCRGRGKKRAFSGFSSGRATKKPRATAPSARGKTSGRGGAKPATSLKRNMYPATSM). The Nuclear localization signal signature appears at 939–955 (KKRAFSGFSSGRATKKP).

This sequence belongs to the helicase family. RecQ subfamily. As to quaternary structure, monomer. Homodimer (via N-terminus). Homotetramer (via N-terminus); dimer of dimers. Homohexamer (via N-terminus). Self-association negatively regulates DNA unwinding amplitude and rate. Oligomer forms dissociate into monomer in presence of ATP. Component of the BTR double Holliday Junction dissolution complex composed of at least him-6, top-3, rmh-1 and rmif-2, which is involved in double strand break repair in the germline. May interact with rmh-1; the interaction is required for mutual stability and localization at nuclear foci. Forms a complex composed of cdc-48.1, him-6 and crp-1; within the complex, interacts with cdc-48.1. Requires Zn(2+) as cofactor.

The protein resides in the nucleus. The protein localises to the chromosome. It catalyses the reaction Couples ATP hydrolysis with the unwinding of duplex DNA by translocating in the 3'-5' direction.. The enzyme catalyses ATP + H2O = ADP + phosphate + H(+). In terms of biological role, component of the BTR double Holliday Junction dissolution complex, which is involved in homologous recombination during meiotic double strand break in the germline. Stabilizes and positively regulates the localization of the BTR double Holliday Junction dissolution complex component rmh-1 at nuclear foci during meiotic recombination. Participates in DNA replication and repair. Exhibits a magnesium-dependent ATP-dependent DNA-helicase activity that unwinds single- and double-stranded DNA in a 3'-5' direction. Negatively regulates sister chromatid exchange (SCE). Its function is as follows. ATP-dependent DNA helicase that unwinds single- and double-stranded DNA in a 3'-5' direction. Participates in DNA replication and repair. Negatively regulates sister chromatid exchange (SCE). Stimulates DNA 4-way junction branch migration and DNA Holliday junction dissolution. Binds single-stranded DNA (ssDNA), forked duplex DNA and DNA Holliday junction. In Caenorhabditis elegans, this protein is RecQ-like DNA helicase blm-1.